The following is a 675-amino-acid chain: Methionine--tRNA ligase (675 aa).

The 'HIGH' region motif lies at Pro-15–His-25. Zn(2+) is bound by residues Cys-146, Cys-149, Cys-159, and Cys-162. A 'KMSKS' region motif is present at residues Lys-331 to Ser-335. Residue Lys-334 coordinates ATP. The tRNA-binding domain occupies Asp-574–Lys-675.

It belongs to the class-I aminoacyl-tRNA synthetase family. MetG type 1 subfamily. As to quaternary structure, homodimer. Zn(2+) is required as a cofactor.

Its subcellular location is the cytoplasm. It catalyses the reaction tRNA(Met) + L-methionine + ATP = L-methionyl-tRNA(Met) + AMP + diphosphate. Is required not only for elongation of protein synthesis but also for the initiation of all mRNA translation through initiator tRNA(fMet) aminoacylation. The chain is Methionine--tRNA ligase from Pseudoalteromonas atlantica (strain T6c / ATCC BAA-1087).